A 137-amino-acid chain; its full sequence is Large ribosomal subunit protein uL16 (137 aa).

The protein belongs to the universal ribosomal protein uL16 family. Part of the 50S ribosomal subunit.

Functionally, binds 23S rRNA and is also seen to make contacts with the A and possibly P site tRNAs. This chain is Large ribosomal subunit protein uL16, found in Legionella pneumophila (strain Paris).